A 365-amino-acid chain; its full sequence is Fructose-1,6-bisphosphatase class 1 2 (365 aa).

4 residues coordinate Mg(2+): Glu100, Asp122, Leu124, and Asp125. Substrate-binding positions include 125 to 128 (DGSS) and Asn221. Glu293 contacts Mg(2+).

The protein belongs to the FBPase class 1 family. In terms of assembly, homotetramer. Requires Mg(2+) as cofactor.

It is found in the cytoplasm. The enzyme catalyses beta-D-fructose 1,6-bisphosphate + H2O = beta-D-fructose 6-phosphate + phosphate. It participates in carbohydrate biosynthesis; gluconeogenesis. This Cupriavidus metallidurans (strain ATCC 43123 / DSM 2839 / NBRC 102507 / CH34) (Ralstonia metallidurans) protein is Fructose-1,6-bisphosphatase class 1 2.